We begin with the raw amino-acid sequence, 1230 residues long: MSILSENNPTPTSITDPNKSSHLHNPELNSGTRVASGPGPGPEAESTPLAPPTEVMNTTSANTSSLSLGSPMHEKIKQFDQDEVDTGETNDRTIESGSGDIDDSQQSHNNNNNNNNNNNESNPESSEGDDEKTQGMPPRMPGTFNVKGLHQGDDSDNEKQYTELTKSINKRTSKDSYSPGTLESPGTLNALETNNVSPAVIEEEQHTSSLEDLSLSLQHQNENARLSAPRSAPPQVPTSKTSSFHDMSSVISSSTSVHKIPSNPTSTRGSHLSSYKSTLDPGKPAQAAAPPPPEIDIDNLLTKSELDSETDTLSSATNSPNLLRNDTLQGIPTRDDENIDDSPRQLSQNTSATSRNTSGTSTSTVVKNSRSGTSKSTSTSTAHNQTAAITPIIPSHNKFHQQVINTNATNSLSSLEPLGVGINSNSSPKSGKKRKSGSKVRGVFSSMFGKNKSTSSSSSSNSGSNSHSQEVNIKISTPFNAKHLAHVGIDDNGSYTGLPIEWERLLSASGITKKEQQQHPQAVMDIVAFYQDTSENPDDAAFKKFHFDNNKSSSSGWSNENTPPATPGGSNSGSGSGGGGAPSSPHRTPPSSIIEKNNVEQKVITPSQSMPTKTESKQSENQHPHEDNATQYTPRTPTSHVQEGQFIPSRPAPKPPSTPLSSMSVSHKTPSSQSLPRSDSQSDIRSSTPKSHQDVSPSKIKIRSISSKSLKSMRSRKSGDKFTHIAPAPPPPSLPSIPKSKSHSASLSSQLRPATNGSTTAPIPASAAFGGENNALPKQRINEFKAHRAPPPPPSAPPAPPVPPAPPANLLSEQTSEIPQQRTAPSQALADVTAPTNIYEIQQTKYQEAQQKLREKKARELEEIQRLREKNERQNRQQETGQNNADTASGGSNIAPPVPVPNKKPPSGSGGGRDAKQAALIAQKKREEKKRKNLQIIAKLKTICNPGDPNELYVDLVKIGQGASGGVFLAHDVRDKSNIVAIKQMNLEQQPKKELIINEILVMKGSSHPNIVNFIDSYLLKGDLWVIMEYMEGGSLTDIVTHSVMTEGQIGVVCRETLKGLKFLHSKGVIHRDIKSDNILLNMDGNIKITDFGFCAQINEINSKRITMVGTPYWMAPEIVSRKEYGPKVDVWSLGIMIIEMLEGEPPYLNETPLRALYLIATNGTPKLKDPESLSYDIRKFLAWCLQVDFNKRADADELLHDNFITECDDVSSLSPLVKIARLKKMSESD.

Residues 1–20 (MSILSENNPTPTSITDPNKS) are compositionally biased toward polar residues. Disordered stretches follow at residues 1 to 384 (MSIL…TAHN) and 413 to 470 (SSLE…HSQE). Composition is skewed to low complexity over residues 57 to 70 (NTTS…SLGS) and 96 to 125 (SGSG…NPES). Residues 150 to 161 (HQGDDSDNEKQY) show a composition bias toward basic and acidic residues. Polar residues-rich tracts occupy residues 175-197 (DSYS…NNVS), 207-224 (TSSL…NENA), and 237-246 (PTSKTSSFHD). Residues 248–257 (SSVISSSTSV) are compositionally biased toward low complexity. Polar residues-rich tracts occupy residues 262–277 (SNPT…SYKS) and 311–330 (DTLS…TLQG). Composition is skewed to low complexity over residues 349–381 (NTSA…STST) and 439–468 (KVRG…NSHS). The 14-residue stretch at 475–488 (ISTPFNAKHLAHVG) folds into the CRIB domain. 2 disordered regions span residues 545–831 (FHFD…ALAD) and 867–919 (LREK…KQAA). The span at 550 to 561 (NKSSSSGWSNEN) shows a compositional bias: polar residues. A compositionally biased stretch (gly residues) spans 570–581 (SNSGSGSGGGGA). The span at 604 to 613 (ITPSQSMPTK) shows a compositional bias: polar residues. Residues 614-628 (TESKQSENQHPHEDN) show a composition bias toward basic and acidic residues. Residues 629–642 (ATQYTPRTPTSHVQ) are compositionally biased toward polar residues. 3 stretches are compositionally biased toward low complexity: residues 670 to 683 (PSSQ…SQSD), 696 to 710 (SPSK…SKSL), and 736 to 749 (SIPK…SLSS). Polar residues predominate over residues 750 to 761 (QLRPATNGSTTA). Pro residues predominate over residues 789–807 (APPPPPSAPPAPPVPPAPP). Residues 811–826 (LSEQTSEIPQQRTAPS) are compositionally biased toward polar residues. Positions 867 to 876 (LREKNERQNR) are enriched in basic and acidic residues. Residues 877–892 (QQETGQNNADTASGGS) show a composition bias toward polar residues. The Protein kinase domain maps to 953 to 1205 (YVDLVKIGQG…ADELLHDNFI (253 aa)). Residues 959–967 (IGQGASGGV) and K983 contribute to the ATP site. D1073 acts as the Proton acceptor in catalysis.

The protein belongs to the protein kinase superfamily. STE Ser/Thr protein kinase family. STE20 subfamily.

The protein localises to the cytoplasm. It localises to the nucleus. The enzyme catalyses L-seryl-[protein] + ATP = O-phospho-L-seryl-[protein] + ADP + H(+). The catalysed reaction is L-threonyl-[protein] + ATP = O-phospho-L-threonyl-[protein] + ADP + H(+). Its function is as follows. MAP4K component of the MAPK pathway required for the mating pheromone response, and the regulation of cell polarity and cell cycle. Phosphorylates histone H2B to form H2BS10ph. Required for hyphal formation and virulence. The chain is Serine/threonine-protein kinase CST20 (CST20) from Candida albicans (Yeast).